The following is a 218-amino-acid chain: Ras-related protein RABA1i (218 aa).

Residue 20–27 (GDSGVGKS) coordinates GTP. Positions 42–50 (SRATIGVEF) match the Effector region motif. GTP contacts are provided by residues 68–72 (DTAGQ), 126–129 (NKAD), and 156–157 (SA). 2 S-geranylgeranyl cysteine lipidation sites follow: Cys-215 and Cys-216.

Belongs to the small GTPase superfamily. Rab family.

It is found in the cell membrane. Functionally, intracellular vesicle trafficking and protein transport. The chain is Ras-related protein RABA1i (RABA1I) from Arabidopsis thaliana (Mouse-ear cress).